Reading from the N-terminus, the 353-residue chain is DNA-directed RNA polymerase subunit alpha (353 aa).

The tract at residues 1–234 is alpha N-terminal domain (alpha-NTD); sequence MVQEKVRVST…DLFIPFLHTE (234 aa). Residues 266 to 353 are alpha C-terminal domain (alpha-CTD); it reads KKIALKSIFI…LAQSIYSESG (88 aa).

Belongs to the RNA polymerase alpha chain family. In terms of assembly, in plastids the minimal PEP RNA polymerase catalytic core is composed of four subunits: alpha, beta, beta', and beta''. When a (nuclear-encoded) sigma factor is associated with the core the holoenzyme is formed, which can initiate transcription.

Its subcellular location is the plastid. The protein localises to the chloroplast. The enzyme catalyses RNA(n) + a ribonucleoside 5'-triphosphate = RNA(n+1) + diphosphate. In terms of biological role, DNA-dependent RNA polymerase catalyzes the transcription of DNA into RNA using the four ribonucleoside triphosphates as substrates. This chain is DNA-directed RNA polymerase subunit alpha, found in Panax ginseng (Korean ginseng).